A 336-amino-acid polypeptide reads, in one-letter code: Flavonoid 4'-O-methyltransferase 5 (336 aa).

Residues tyrosine 140 and aspartate 203 each coordinate S-adenosyl-L-methionine. Residue histidine 241 is the Proton acceptor of the active site.

Belongs to the class I-like SAM-binding methyltransferase superfamily. Cation-independent O-methyltransferase family. Homodimer. In terms of tissue distribution, expressed in leaves.

The catalysed reaction is genkwanin + S-adenosyl-L-methionine = apigenin 4',7-dimethyl ether + S-adenosyl-L-homocysteine. It catalyses the reaction cirsiliol + S-adenosyl-L-methionine = eupatorin + S-adenosyl-L-homocysteine + H(+). The enzyme catalyses cirsimaritin + S-adenosyl-L-methionine = salvigenin + S-adenosyl-L-homocysteine + H(+). It carries out the reaction scutellarein 7-methyl ether + S-adenosyl-L-methionine = ladanein + S-adenosyl-L-homocysteine + H(+). The catalysed reaction is (2S)-sakuranetin + S-adenosyl-L-methionine = (2S)-naringenin 4',7-dimethyl ether + S-adenosyl-L-homocysteine + H(+). It functions in the pathway flavonoid metabolism. With respect to regulation, substrate inhibition by genkwanin (GENK) at concentrations above 10 mM. Functionally, flavonoid 4'-O-methyltransferase involved in the biosynthesis of polymethoxylated flavonoids natural products such as nevadensin and salvigenin, aroma compounds which contribute to the flavor of sweet basil, and exhibit pharmacological activities such as anti-allergic, anti-oxidant, antibacterial, anti-proliferative, and anti-inflammatory effects. Catalyzes S-adenosylmethionine-dependent regioselective 4'-O-methylation of flavonoids; active on various hydroxylated flavonoid substrates, including scutellarein-7-methyl ether (SCU7Me) and, with a lower efficiency, cirsimaritin (CIRM), sakuranetin (NAR7Me), ladanein (LAD) and genkwanin (GENK). In Ocimum basilicum (Sweet basil), this protein is Flavonoid 4'-O-methyltransferase 5.